Reading from the N-terminus, the 140-residue chain is Putative pre-16S rRNA nuclease (140 aa).

Belongs to the YqgF nuclease family.

It localises to the cytoplasm. Could be a nuclease involved in processing of the 5'-end of pre-16S rRNA. The polypeptide is Putative pre-16S rRNA nuclease (Aeromonas hydrophila subsp. hydrophila (strain ATCC 7966 / DSM 30187 / BCRC 13018 / CCUG 14551 / JCM 1027 / KCTC 2358 / NCIMB 9240 / NCTC 8049)).